The sequence spans 300 residues: Ribosomal protein L11 methyltransferase (300 aa).

Residues Thr152, Gly173, Asp195, and Asn234 each contribute to the S-adenosyl-L-methionine site.

It belongs to the methyltransferase superfamily. PrmA family.

Its subcellular location is the cytoplasm. It catalyses the reaction L-lysyl-[protein] + 3 S-adenosyl-L-methionine = N(6),N(6),N(6)-trimethyl-L-lysyl-[protein] + 3 S-adenosyl-L-homocysteine + 3 H(+). In terms of biological role, methylates ribosomal protein L11. This is Ribosomal protein L11 methyltransferase from Paraburkholderia phytofirmans (strain DSM 17436 / LMG 22146 / PsJN) (Burkholderia phytofirmans).